The chain runs to 481 residues: MVMAAKKGPGPGGGVSGGKAEAEAASEVWCRRVRELGGCSQAGNRHCFECAQRGVTYVDITVGSFVCTTCSGLLRGLNPPHRVKSISMTTFTEPEVVFLQSRGNEVCRKIWLGLFDARTSLVPDSRDPQKVKEFLQEKYEKKRWYVPPDQVKGPTYTKGSASTPVQGSIPEGKPLRTLLGDPAPSLSVAASTSSQPVSQSHARTSQARSTQPPPHSSVKKASTDLLADIGGDPFAAPQMAPAFAAFPAFGGQTPSQGGFANFDAFSSGPSSSVFGSLPPAGQASFQAQPTPAGSSQGTPFGATPLAPASQPNSLADVGSFLGPGVPAAGVPSSLFGMAGQVPPLQSVTMGGGGGSSTGLAFGAFTNPFTAPAAQSPLPSTNPFQPNGLAPGPGFGMSSAGPGFPQAVPPTGAFASSFPAPLFPPQTPLVQQQNGSSFGDLGSAKLGQRPLSQPAGISTNPFMTGPSSSPFASKPPTTNPFL.

The Arf-GAP domain occupies 27-153; sequence EVWCRRVREL…WYVPPDQVKG (127 aa). Residues 47–70 form a C4-type zinc finger; that stretch reads CFECAQRGVTYVDITVGSFVCTTC. Disordered regions lie at residues 150–220, 271–309, and 431–481; these read QVKG…SVKK, SSVF…APAS, and QQNG…NPFL. A compositionally biased stretch (polar residues) spans 157–166; that stretch reads TKGSASTPVQ. Position 173 is an N6-acetyllysine (Lys-173). Polar residues-rich tracts occupy residues 188–210, 283–298, and 454–481; these read VAAS…ARST, ASFQ…SQGT, and AGIS…NPFL.

In terms of assembly, interacts with EPS15R.

The polypeptide is Arf-GAP domain and FG repeat-containing protein 2 (AGFG2) (Homo sapiens (Human)).